We begin with the raw amino-acid sequence, 579 residues long: Capsid vertex component 2 (579 aa).

The segment at 1–46 (MSRFMHFYKSPVPLVLQAHKKNCLVYTNLRTRRLRLLAQLNQREKE) is interaction with major capsid protein/MCP. The tract at residues 92-134 (RPNEQVSSSTTTGHNNTTGTPTQSVVSGTGAVTGTGGTSSVAP) is disordered. Residues 101–121 (TTTGHNNTTGTPTQSVVSGTG) are compositionally biased toward low complexity.

This sequence belongs to the herpesviridae CVC2 protein family. Heterodimerizes with CVC1. Interacts with major capsid protein/MCP and triplex capsid protein 1/TRX1 at the pentamer vertices. Interacts with the large tegument protein/LTP.

It localises to the virion. The protein localises to the host nucleus. In terms of biological role, capsid vertex-specific component that plays a role during viral DNA encapsidation, assuring correct genome cleavage and presumably stabilizing capsids that contain full-length viral genomes. Participates in the interaction between the capsid and the tegument through interaction with the large tegument protein/LTP. This Elephantid herpesvirus 1 (isolate Asian elephant/Berlin/Kiba/1998) (EIHV-1) protein is Capsid vertex component 2.